The sequence spans 415 residues: ASMFKHDHYMDNGVRYPNGDGICEQLNETKCDAGFSYDRSICEGPHYWHTISKCFIACGIGQRQSPINIVSYDAKFRQRLPKLKFKPHMEKLKTEVTNHQNRAPEFEPEDGENLYVKLNNLVDGHYKFHNLHVHNGRTRRKGSEHSVNGRFTPMEAHLVFHHDEQTHFEPTRTKLGGAFPGHNDFVVVGVFLEVGDDGFGDEPDDEECKHILKGHHPDNNENGNGDNGNNGYNGDNGNNGDNGNNGYNGDNGNNGVNGNNGYNGDNGNNGDNGNNGENGNNGENGNNGENGHKHGCRVKKAKHLSRILECAYRNDKVREFKKVGEEEGLDVHLTPEMPLPPLKYRHYYTYEGSLTTPPCTESVLWVVQKCHVQVSRRVLHALRNVEGYKDGTTLRKYGTRRPTQKNKVTVYKSFK.

N-linked (GlcNAc...) asparagine glycosylation occurs at N27. The Alpha-carbonic anhydrase domain maps to 33-414 (AGFSYDRSIC…KNKVTVYKSF (382 aa)). Residues H132, H134, and H157 each contribute to the Zn(2+) site. The disordered stretch occupies residues 201 to 297 (DEPDDEECKH…GENGHKHGCR (97 aa)). A compositionally biased stretch (basic and acidic residues) spans 207-219 (ECKHILKGHHPDN). Residues 220–289 (NENGNGDNGN…NNGENGNNGE (70 aa)) show a composition bias toward low complexity. A run of 22 repeats spans residues 225-227 (GDN), 228-230 (GNN), 231-233 (GYN), 234-236 (GDN), 237-239 (GNN), 240-242 (GDN), 243-245 (GNN), 246-248 (GYN), 249-251 (GDN), 252-254 (GNN), 255-257 (GVN), 258-260 (GNN), 261-263 (GYN), 264-266 (GDN), 267-269 (GNN), 270-272 (GDN), 273-275 (GNN), 276-278 (GEN), 279-281 (GNN), 282-284 (GEN), 285-286 (GN), and 288-290 (GEN). The interval 225–290 (GDNGNNGYNG…NGENGNNGEN (66 aa)) is 27 X 3 AA approximate tandem repeats of G-X-N. 355 to 356 (TT) serves as a coordination point for substrate.

Belongs to the alpha-carbonic anhydrase family. In terms of assembly, homooligomer; disulfide-linked. May also be disulfide-linked to insoluble organic matrix. The cofactor is Zn(2+). Expressed in the mantle.

It is found in the secreted. Its subcellular location is the extracellular space. The protein localises to the extracellular matrix. It catalyses the reaction hydrogencarbonate + H(+) = CO2 + H2O. Functionally, acts as a negative regulator for calcification in the shells of mollusks. May function both as a calcium concentrator and as a carbonic anhydrase required for production of carbonate ions, which are assembled to CaCO(3) at mineralization sites. Is important for shell formation in both the calcitic prismatic layer and the aragonitic nacreous layer. Shows inhibitory activity of crystal formation when present in free state but, when attached to the insoluble matrix, may regulate the form and size of aragonite crystal. This Crassostrea nippona (Iwagaki oyster) protein is Nacrein-like protein C2.